Here is a 92-residue protein sequence, read N- to C-terminus: Integration host factor subunit beta (92 aa).

Belongs to the bacterial histone-like protein family. As to quaternary structure, heterodimer of an alpha and a beta chain.

This protein is one of the two subunits of integration host factor, a specific DNA-binding protein that functions in genetic recombination as well as in transcriptional and translational control. This chain is Integration host factor subunit beta, found in Bartonella tribocorum (strain CIP 105476 / IBS 506).